Reading from the N-terminus, the 401-residue chain is Chorismate synthase (401 aa).

Positions 40 and 46 each coordinate NADP(+). Residues 135 to 137, 256 to 257, Gly302, 317 to 321, and Arg343 contribute to the FMN site; these read RAS, QA, and KPISS.

Belongs to the chorismate synthase family. Homotetramer. The cofactor is FMNH2.

The catalysed reaction is 5-O-(1-carboxyvinyl)-3-phosphoshikimate = chorismate + phosphate. Its pathway is metabolic intermediate biosynthesis; chorismate biosynthesis; chorismate from D-erythrose 4-phosphate and phosphoenolpyruvate: step 7/7. Catalyzes the anti-1,4-elimination of the C-3 phosphate and the C-6 proR hydrogen from 5-enolpyruvylshikimate-3-phosphate (EPSP) to yield chorismate, which is the branch point compound that serves as the starting substrate for the three terminal pathways of aromatic amino acid biosynthesis. This reaction introduces a second double bond into the aromatic ring system. The chain is Chorismate synthase from Saccharopolyspora erythraea (strain ATCC 11635 / DSM 40517 / JCM 4748 / NBRC 13426 / NCIMB 8594 / NRRL 2338).